A 562-amino-acid chain; its full sequence is ATP-dependent RNA helicase dbp2 (562 aa).

Residues 132–160 (ETFDEAGFPRYVMDEVKAQGFPAPTAIQS) carry the Q motif motif. The Helicase ATP-binding domain occupies 163–338 (WPMALSGRDV…ADFLTDFIQV (176 aa)). 176-183 (AETGSGKT) contributes to the ATP binding site. The short motif at 286 to 289 (DEAD) is the DEAD box element. A Helicase C-terminal domain is found at 370–515 (HLEKIMEGRE…QIDPRLAEMA (146 aa)). The segment at 526–548 (GGYRGRGGGGWRGGRGGGGGGGS) is RNA-binding RGG-box. The segment covering 536–550 (WRGGRGGGGGGGSVG) has biased composition (gly residues). The segment at 536–562 (WRGGRGGGGGGGSVGGANALPLNNRRW) is disordered.

This sequence belongs to the DEAD box helicase family. DDX5/DBP2 subfamily. As to quaternary structure, associates with polysomes.

It localises to the cytoplasm. The protein localises to the nucleus. It carries out the reaction ATP + H2O = ADP + phosphate + H(+). Functionally, ATP-dependent RNA helicase involved nonsense-mediated mRNA decay and ribosome biogenesis through rRNA processing. This Neurospora crassa (strain ATCC 24698 / 74-OR23-1A / CBS 708.71 / DSM 1257 / FGSC 987) protein is ATP-dependent RNA helicase dbp2 (drh-1).